Consider the following 460-residue polypeptide: MWQFRVFLLLMSTWGISSIPAHPDPVFSSSEHAHQVLRVRRANSFLEEMRPGSLERECMEEICDFEEAQEIFQNVEDTLAFWIKYFDGDQCSAPPLDHQCDSPCCGHGTCIDGIGSFSCSCDKGWEGKFCQQELRFQDCRVNNGGCLHYCLEESNGRRCACAPGYELADDHMRCKSTVNFPCGKLGRWIEKKRKILKRDTDLEDELEPDPRIVNGTLTKQGDSPWQAILLDSKKKLACGGVLIHTSWVLTAAHCVEGTKKLTVRLGEYDLRRRDHWELDLDIKEILVHPNYTRSSSDNDIALLRLAQPATLSKTIVPICLPNNGLAQELTQAGQETVVTGWGYQSDRIKDGRRNRTFILTFIRIPLVARNECVEVMKNVVSENMLCAGIIGDTRDACDGDSGGPMVVFFRGTWFLVGLVSWGEGCGHTNNYGIYTKVGSYLKWIHSYIGEKGVSLKSQKL.

A signal peptide spans 1–18 (MWQFRVFLLLMSTWGISS). The propeptide occupies 19–41 (IPAHPDPVFSSSEHAHQVLRVRR). One can recognise a Gla domain in the interval 42-87 (ANSFLEEMRPGSLERECMEEICDFEEAQEIFQNVEDTLAFWIKYFD). Glutamate 47, glutamate 48, glutamate 55, glutamate 57, glutamate 60, glutamate 61, glutamate 66, glutamate 67, glutamate 70, and glutamate 76 each carry 4-carboxyglutamate. Residues cysteine 58 and cysteine 63 are joined by a disulfide bond. 9 cysteine pairs are disulfide-bonded: cysteine 91–cysteine 110, cysteine 100–cysteine 105, cysteine 104–cysteine 119, cysteine 121–cysteine 130, cysteine 139–cysteine 150, cysteine 146–cysteine 159, cysteine 161–cysteine 174, cysteine 182–cysteine 319, and cysteine 238–cysteine 254. 2 EGF-like domains span residues 96–131 (LDHQ…KFCQ) and 135–175 (RFQD…MRCK). At aspartate 112 the chain carries (3R)-3-hydroxyaspartate. In terms of domain architecture, Peptidase S1 spans 213–449 (VNGTLTKQGD…YLKWIHSYIG (237 aa)). N-linked (GlcNAc...) asparagine glycosylation is present at asparagine 214. The active-site Charge relay system is histidine 253. N-linked (GlcNAc...) asparagine glycosylation is present at asparagine 290. Aspartate 299 serves as the catalytic Charge relay system. The N-linked (GlcNAc...) asparagine glycan is linked to asparagine 354. Disulfide bonds link cysteine 372–cysteine 386 and cysteine 397–cysteine 425. The active-site Charge relay system is the serine 401.

This sequence belongs to the peptidase S1 family. Synthesized as a single chain precursor, which is cleaved into a light chain and a heavy chain held together by a disulfide bond. The enzyme is then activated by thrombin, which cleaves a tetradecapeptide from the amino end of the heavy chain; this reaction, which occurs at the surface of endothelial cells, is strongly promoted by thrombomodulin. In terms of processing, the vitamin K-dependent, enzymatic carboxylation of some Glu residues allows the modified protein to bind calcium. Post-translationally, the iron and 2-oxoglutarate dependent 3-hydroxylation of aspartate and asparagine is (R) stereospecific within EGF domains. As to expression, plasma; synthesized in the liver.

It localises to the secreted. The protein resides in the golgi apparatus. It is found in the endoplasmic reticulum. The catalysed reaction is Degradation of blood coagulation factors Va and VIIIa.. Functionally, protein C is a vitamin K-dependent serine protease that regulates blood coagulation by inactivating factors Va and VIIIa in the presence of calcium ions and phospholipids. Exerts a protective effect on the endothelial cell barrier function. This Mus musculus (Mouse) protein is Vitamin K-dependent protein C (Proc).